The chain runs to 56 residues: Large ribosomal subunit protein bL32c (56 aa).

It belongs to the bacterial ribosomal protein bL32 family.

It localises to the plastid. The protein localises to the chloroplast. The sequence is that of Large ribosomal subunit protein bL32c from Huperzia lucidula (Shining clubmoss).